The sequence spans 495 residues: Probable staphylococcal-like nuclease CAN4 (495 aa).

The N-myristoyl glycine moiety is linked to residue Gly2. Cys11 carries the S-palmitoyl cysteine lipid modification. Disordered regions lie at residues 45–68 (DLQV…RPAL) and 81–101 (LQVP…PPRP). The span at 50–66 (LSPPPPSTRQQQPPPRP) shows a compositional bias: pro residues. Residues 297 to 470 (KTLPVNAKCI…RDARQGLWAY (174 aa)) form the TNase-like domain. Position 310 (Asp310) interacts with Ca(2+). Arg377 is a catalytic residue. Residue Asp382 coordinates Ca(2+). Residues Glu385 and Arg419 contribute to the active site.

Belongs to the thermonuclease family. Ca(2+) serves as cofactor.

The protein localises to the cell membrane. In terms of biological role, enzyme that catalyzes the hydrolysis of both DNA and RNA at the 5' position of the phosphodiester bond. In Oryza sativa subsp. japonica (Rice), this protein is Probable staphylococcal-like nuclease CAN4.